The sequence spans 646 residues: Mitochondrial distribution and morphology protein 10 (646 aa).

Disordered stretches follow at residues 206 to 230 (KSTSSSMDRLDSSNPSLSSSTSLSN) and 315 to 347 (ETSSSASYPQRNGSVLHTGSSSSSEDTEAGGGL). Residues 207 to 230 (STSSSMDRLDSSNPSLSSSTSLSN) are compositionally biased toward low complexity. Polar residues predominate over residues 315 to 333 (ETSSSASYPQRNGSVLHTG).

Belongs to the MDM10 family. In terms of assembly, component of the ER-mitochondria encounter structure (ERMES) or MDM complex, composed of MMM1, MDM10, MDM12 and MDM34. Associates with the mitochondrial outer membrane sorting assembly machinery SAM(core) complex.

The protein localises to the mitochondrion outer membrane. Functionally, component of the ERMES/MDM complex, which serves as a molecular tether to connect the endoplasmic reticulum and mitochondria. Components of this complex are involved in the control of mitochondrial shape and protein biogenesis and may function in phospholipid exchange. MDM10 is involved in the late assembly steps of the general translocase of the mitochondrial outer membrane (TOM complex). Functions in the TOM40-specific route of the assembly of outer membrane beta-barrel proteins, including the association of TOM40 with the receptor TOM22 and small TOM proteins. Can associate with the SAM(core) complex as well as the MDM12-MMM1 complex, both involved in late steps of the major beta-barrel assembly pathway, that is responsible for biogenesis of all outer membrane beta-barrel proteins. May act as a switch that shuttles between both complexes and channels precursor proteins into the TOM40-specific pathway. Plays a role in mitochondrial morphology and in the inheritance of mitochondria. In Mycosarcoma maydis (Corn smut fungus), this protein is Mitochondrial distribution and morphology protein 10.